Consider the following 155-residue polypeptide: Transcriptional repressor NrdR (155 aa).

A zinc finger lies at 3-34; that stretch reads CPFCGNVDTQVKDSRPAEDHVSIRRRRFCPAC. An ATP-cone domain is found at 49–139; that stretch reads LVVIKTNGKR…VYKNFQAADD (91 aa).

The protein belongs to the NrdR family. Requires Zn(2+) as cofactor.

Its function is as follows. Negatively regulates transcription of bacterial ribonucleotide reductase nrd genes and operons by binding to NrdR-boxes. This Ruegeria sp. (strain TM1040) (Silicibacter sp.) protein is Transcriptional repressor NrdR.